We begin with the raw amino-acid sequence, 254 residues long: Uridine-cytidine kinase 1 (254 aa).

The interval 1–29 (MASAGGDECEGAAPEADRPHQRPFLIGVS) is disordered. 30–38 (GGTASGKST) contributes to the ATP binding site. Substrate contacts are provided by aspartate 87, tyrosine 115, histidine 120, arginine 146, arginine 155, and glutamine 163. Residue aspartate 192 coordinates ATP. A disordered region spans residues 224-254 (SYKRTFSEPGDHPGMLTSGKRSHLESSSRPH). At threonine 228 the chain carries Phosphothreonine. Serine 230 bears the Phosphoserine mark. Basic and acidic residues predominate over residues 245 to 254 (SHLESSSRPH).

It belongs to the uridine kinase family.

The catalysed reaction is uridine + ATP = UMP + ADP + H(+). It carries out the reaction cytidine + ATP = CMP + ADP + H(+). It participates in pyrimidine metabolism; CTP biosynthesis via salvage pathway; CTP from cytidine: step 1/3. Its pathway is pyrimidine metabolism; UMP biosynthesis via salvage pathway; UMP from uridine: step 1/1. Its function is as follows. Phosphorylates uridine and cytidine to uridine monophosphate and cytidine monophosphate. Does not phosphorylate deoxyribonucleosides or purine ribonucleosides. Can use ATP or GTP as a phosphate donor. In Macaca fascicularis (Crab-eating macaque), this protein is Uridine-cytidine kinase 1 (UCK1).